The chain runs to 186 residues: Spermidine N(1)-acetyltransferase (186 aa).

The 161-residue stretch at 7-167 (VKLRPLERED…NAIRMCIFQH (161 aa)) folds into the N-acetyltransferase domain. Residues Met-30, Glu-35, Glu-43, and 51–54 (HIHD) each bind spermine. Glu-35 is a Mg(2+) binding site. Positions 35 and 43 each coordinate spermidine. Glu-76 contributes to the Mg(2+) binding site. Residue 85–87 (EFQ) participates in spermine binding. Acetyl-CoA contacts are provided by residues 88-90 (III), 95-101 (QGKGLAT), and 128-137 (NEKAIHIYRK). Catalysis depends on Tyr-135, which acts as the Proton donor.

This sequence belongs to the acetyltransferase family. In terms of assembly, homododecamer.

Its subcellular location is the cytoplasm. It catalyses the reaction an alkane-alpha,omega-diamine + acetyl-CoA = an N-acetylalkane-alpha,omega-diamine + CoA + H(+). The catalysed reaction is spermidine + acetyl-CoA = N(1)-acetylspermidine + CoA + H(+). It carries out the reaction spermidine + acetyl-CoA = N(8)-acetylspermidine + CoA + H(+). The enzyme catalyses spermine + acetyl-CoA = N(1)-acetylspermine + CoA + H(+). Its pathway is amine and polyamine degradation; spermidine degradation. It functions in the pathway amine and polyamine degradation; spermine degradation. Involved in the protection against polyamine toxicity by regulating their concentration. Catalyzes the transfer of an acetyl group from acetyl coenzyme A (AcCoA) to the primary amino groups of spermidine to yield N(1)- and N(8)-acetylspermidine. It can also use spermine. The chain is Spermidine N(1)-acetyltransferase (speG) from Escherichia coli O157:H7.